The following is a 156-amino-acid chain: Transcription antitermination protein NusB (156 aa).

The protein belongs to the NusB family.

In terms of biological role, involved in transcription antitermination. Required for transcription of ribosomal RNA (rRNA) genes. Binds specifically to the boxA antiterminator sequence of the ribosomal RNA (rrn) operons. This is Transcription antitermination protein NusB from Mycobacterium tuberculosis (strain CDC 1551 / Oshkosh).